We begin with the raw amino-acid sequence, 286 residues long: Acetyl-coenzyme A carboxylase carboxyl transferase subunit beta (286 aa).

The region spanning 23-286 (IWVKCNNCNQ…ITNKPEPKKE (264 aa)) is the CoA carboxyltransferase N-terminal domain. 4 residues coordinate Zn(2+): C27, C30, C46, and C49. The segment at 27-49 (CNNCNQMIYKIELEKNLEVCPKC) adopts a C4-type zinc-finger fold.

Belongs to the AccD/PCCB family. In terms of assembly, acetyl-CoA carboxylase is a heterohexamer composed of biotin carboxyl carrier protein (AccB), biotin carboxylase (AccC) and two subunits each of ACCase subunit alpha (AccA) and ACCase subunit beta (AccD). Requires Zn(2+) as cofactor.

It is found in the cytoplasm. It catalyses the reaction N(6)-carboxybiotinyl-L-lysyl-[protein] + acetyl-CoA = N(6)-biotinyl-L-lysyl-[protein] + malonyl-CoA. It functions in the pathway lipid metabolism; malonyl-CoA biosynthesis; malonyl-CoA from acetyl-CoA: step 1/1. Component of the acetyl coenzyme A carboxylase (ACC) complex. Biotin carboxylase (BC) catalyzes the carboxylation of biotin on its carrier protein (BCCP) and then the CO(2) group is transferred by the transcarboxylase to acetyl-CoA to form malonyl-CoA. The polypeptide is Acetyl-coenzyme A carboxylase carboxyl transferase subunit beta (Wigglesworthia glossinidia brevipalpis).